The sequence spans 572 residues: Pentatricopeptide repeat-containing protein At1g26900, mitochondrial (572 aa).

The N-terminal 117 residues, 1–117 (MTLAITSRLR…RAFSVFNQLR (117 aa)), are a transit peptide targeting the mitochondrion. 12 PPR repeats span residues 89-123 (NLFM…GLTL), 124-158 (DRFS…GFMV), 159-189 (FTDL…MPQS), 191-225 (DAVT…EVVV), 226-260 (NVST…GLDL), 261-291 (DLHL…AIRK), 292-326 (DVVT…KMKP), 327-361 (NSST…RIAL), 362-392 (DAIL…MKDK), 393-427 (DVKS…NCKV), 430-460 (NEIT…MVEA), and 466-496 (KVEH…LPIT). Residues 501-572 (AWRALLAACR…EAGYSAIEIE (72 aa)) are type E motif.

It belongs to the PPR family. PCMP-E subfamily.

It is found in the mitochondrion. The protein is Pentatricopeptide repeat-containing protein At1g26900, mitochondrial (PCMP-E54) of Arabidopsis thaliana (Mouse-ear cress).